The chain runs to 335 residues: MPASQTFTLLLHKQRHRDKRHLLLLTLGVAVAFVFSLSAGDVWLWPSQWSGEAAQLFVWQLRLPRALAVMLVGASLAVAGAVMQSLFENPLAEPGLLGVANGAGVALVLTVLLGNGLLPVAFMSLSAIAGALVMTFLLLSFARRKRLTNARLLLVGVALGIVCSAVMTWAVYFSSSLDLRQLMYWMMGGFGGVDWRQKWLVLALLPVLLWLCCQGKALNFMALGEVQARQLGLSLHLWRNLLVLAIGWLVGVSVALAGVIGFVGLVIPHMLRLSGLTNQRYLLPGCALAGAGVLLAADVVARITLLSAELPIGVVTATLGAPLFIWLLTRVKSLR.

A run of 9 helical transmembrane segments spans residues 22–42 (LLLLTLGVAVAFVFSLSAGDV), 67–87 (LAVMLVGASLAVAGAVMQSLF), 94–114 (PGLLGVANGAGVALVLTVLLG), 117–137 (LLPVAFMSLSAIAGALVMTFL), 153–173 (LLVGVALGIVCSAVMTWAVYF), 200–220 (LVLALLPVLLWLCCQGKALNF), 243–263 (VLAIGWLVGVSVALAGVIGFV), 281–301 (YLLPGCALAGAGVLLAADVVA), and 308–328 (AELPIGVVTATLGAPLFIWLL).

It belongs to the binding-protein-dependent transport system permease family. FecCD subfamily. As to quaternary structure, the complex is composed of two ATP-binding proteins (BtuD), two transmembrane proteins (BtuC) and a solute-binding protein (BtuF).

The protein resides in the cell inner membrane. Functionally, part of the ABC transporter complex BtuCDF involved in vitamin B12 import. Involved in the translocation of the substrate across the membrane. This Serratia proteamaculans (strain 568) protein is Vitamin B12 import system permease protein BtuC.